A 337-amino-acid chain; its full sequence is Cell-surface associated glycoprotein DFI1 (337 aa).

The Cytoplasmic portion of the chain corresponds to 1–21 (MEKLSINNNNNNRRYQSRRFD). Residues 22-42 (GITIIRIVVLVFIVTVSTYFV) traverse the membrane as a helical segment. Over 43 to 269 (NSYTCNQPHH…NGGGLSHTNR (227 aa)) the chain is Extracellular. N53, N65, N87, and N100 each carry an N-linked (GlcNAc...) asparagine glycan. Low complexity-rich tracts occupy residues 124 to 220 (SSTF…TSAS) and 241 to 259 (SVISSSPTASNSNNNKNND). Disordered stretches follow at residues 124-224 (SSTF…QHVT) and 241-265 (SVISSSPTASNSNNNKNNDNGGGLS). Residues 270–290 (IVVGVVVGVGGSILIGLLAVL) form a helical membrane-spanning segment. Residues 273 to 277 (GVVVG) carry the Glycophorin A motif. Topologically, residues 291-337 (FYLRKRNNRDYEGGWTFWRKNEKLGSDEFFNGELGVRDRNINQGSNF) are cytoplasmic. Positions 301–314 (YEGGWTFWRKNEKL) match the Calmodulin-binding motif.

This sequence belongs to the MID2 like cell wall stress sensor family. Post-translationally, cross-linked to the carbohydrate polymers of the cell wall. In terms of processing, O-glycosylated by MNT1 and MNT2. Also N-glycosylated.

It localises to the cell membrane. The protein localises to the cell septum. The protein resides in the secreted. It is found in the cell wall. Its function is as follows. Cell-surface associated glycoprotein that acts as a plasma membrane receptor-type protein which senses the presence of matrix. Binds to calmodulin in response to environmental conditions and initiates a signaling cascade that activates CEK1, thus promoting invasive filamentation. Involved in the maintenance of the cell wall. The sequence is that of Cell-surface associated glycoprotein DFI1 from Candida albicans (strain SC5314 / ATCC MYA-2876) (Yeast).